The chain runs to 583 residues: Membrane-bound O-acyltransferase gup1 (583 aa).

The Extracellular segment spans residues M1–S52. A disordered region spans residues K15 to L42. Residues S22–S40 are compositionally biased toward low complexity. Residues A53 to A73 form a helical membrane-spanning segment. Residues C74–M119 are Cytoplasmic-facing. Residues P120–F140 form a helical membrane-spanning segment. The Extracellular portion of the chain corresponds to T141 to S159. Residues L160–I180 form a helical membrane-spanning segment. At N181–S191 the chain is on the cytoplasmic side. Residues I192–F212 form a helical membrane-spanning segment. Residues A213–K298 lie on the Extracellular side of the membrane. Residues N299–N319 form a helical membrane-spanning segment. Over N320–R343 the chain is Cytoplasmic. Residues F344–S364 form a helical membrane-spanning segment. The Extracellular segment spans residues K365 to S373. The chain crosses the membrane as a helical span at residues A374–I394. Over P395–Y444 the chain is Cytoplasmic. 2 helical membrane passes run V445–A465 and L466–L486. H468 is a catalytic residue. Residues P487–F512 lie on the Cytoplasmic side of the membrane. A helical transmembrane segment spans residues G513–I533. The Extracellular segment spans residues D534–G549. The helical transmembrane segment at A550–I570 threads the bilayer. The Cytoplasmic segment spans residues R571–C583.

The protein belongs to the membrane-bound acyltransferase family.

It is found in the cell membrane. The protein resides in the endoplasmic reticulum membrane. Its subcellular location is the mitochondrion membrane. Functionally, membrane-bound O-acyltransferase involved in the remodeling of glycosylphosphatidylinositol (GPI) anchors. Acts only on GPI-anchored proteins, but not on free GPI lipids. Also involved in lipid metabolism, having profound effects on sphingolipid-sterol-ordered domains integrity and assembly. Involved in cell integrity and apoptosis. In Schizosaccharomyces pombe (strain 972 / ATCC 24843) (Fission yeast), this protein is Membrane-bound O-acyltransferase gup1 (gup1).